Reading from the N-terminus, the 520-residue chain is Pleckstrin homology domain-containing family A member 8 (520 aa).

In terms of domain architecture, PH spans 1–93; the sequence is MEGVLYKWTN…WLVALGSAKA (93 aa). Thr-139 is modified (phosphothreonine). Residue Ser-145 is modified to Phosphoserine. Thr-153 is subject to Phosphothreonine. Residues 255–268 are compositionally biased toward polar residues; it reads ISSEENTDGNTTVQ. Positions 255-303 are disordered; it reads ISSEENTDGNTTVQGERMKEDGEENLESHDRDLAQPGSDSVCSPESPWE. Residues 270–287 are compositionally biased toward basic and acidic residues; sequence ERMKEDGEENLESHDRDL. A glycolipid transfer protein homology domain region spans residues 311–520; the sequence is TFFSTMNTSF…IHGLESDEVV (210 aa).

Homodimer. Interacts with ARF1; the interaction together with phosphatidylinositol 4-phosphate binding is required for FAPP2 GlcCer transfer ability.

It is found in the golgi apparatus. The protein resides in the trans-Golgi network membrane. Its subcellular location is the membrane. In terms of biological role, cargo transport protein that is required for apical transport from the trans-Golgi network (TGN). Transports AQP2 from the trans-Golgi network (TGN) to sites of AQP2 phosphorylation. Mediates the non-vesicular transport of glucosylceramide (GlcCer) from the trans-Golgi network (TGN) to the plasma membrane and plays a pivotal role in the synthesis of complex glycosphingolipids. Binding of both phosphatidylinositol 4-phosphate (PIP) and ARF1 are essential for the GlcCer transfer ability. Also required for primary cilium formation, possibly by being involved in the transport of raft lipids to the apical membrane, and for membrane tubulation. This Rattus norvegicus (Rat) protein is Pleckstrin homology domain-containing family A member 8 (Plekha8).